We begin with the raw amino-acid sequence, 134 residues long: Small ribosomal subunit protein bS6 (134 aa).

Residues 103–134 form a disordered region; that stretch reads AAPVKSAEEGTEEVAAEAATEAPAETTTTVEG. The segment covering 118–134 has biased composition (low complexity); it reads AEAATEAPAETTTTVEG.

It belongs to the bacterial ribosomal protein bS6 family.

Its function is as follows. Binds together with bS18 to 16S ribosomal RNA. The protein is Small ribosomal subunit protein bS6 of Citrifermentans bemidjiense (strain ATCC BAA-1014 / DSM 16622 / JCM 12645 / Bem) (Geobacter bemidjiensis).